A 334-amino-acid chain; its full sequence is Transcription factor MYB92 (334 aa).

2 HTH myb-type domains span residues aspartate 9–leucine 61 and arginine 62–leucine 116. 2 DNA-binding regions (H-T-H motif) span residues tryptophan 37–leucine 61 and tryptophan 89–leucine 112.

In terms of assembly, interacts with FBX5. In terms of tissue distribution, highly expressed in roots and at lower levels in stems, flowers and siliques.

The protein resides in the nucleus. In terms of biological role, probable transcription factor. This chain is Transcription factor MYB92, found in Arabidopsis thaliana (Mouse-ear cress).